The following is a 121-amino-acid chain: ATP synthase epsilon chain (121 aa).

This sequence belongs to the ATPase epsilon chain family. In terms of assembly, F-type ATPases have 2 components, CF(1) - the catalytic core - and CF(0) - the membrane proton channel. CF(1) has five subunits: alpha(3), beta(3), gamma(1), delta(1), epsilon(1). CF(0) has three main subunits: a, b and c.

The protein resides in the cell membrane. Its function is as follows. Produces ATP from ADP in the presence of a proton gradient across the membrane. The sequence is that of ATP synthase epsilon chain from Mycobacterium marinum (strain ATCC BAA-535 / M).